Reading from the N-terminus, the 469-residue chain is MFLPRPDFRIALSICFMAVSFVISRFGSEVRPTLLLALPLVLGHVSTGLIGFVLNVIAGHHSTVTLAASTIGTALLWLPMLVPMGTLISLTVLVSQLHGAERERDIGPLFRQALWLAMLLGLVMFTFLSVVPALLPLFGIVPDIVPGAAKFLHVVRWGSLAFPLYFCMRYFCEGMHCTFPTMLLGFGGLLVLVPLSYALTYGRFGFAEYGVEGLGIATVTVMWLQAVVFALYLWRSRRFAHLQLFAHLELPCWARIRDLLNIGLPIGISILMEGGLFIVTTLLIGRFGTDEIAAHQIALSVAQLCFMIPMGVAEATTVRIGHAVGRCDLLVMRRVAWAGYAIVIGTQTLSASVLLLGYDVIVAAYTDDLVVASLASKLLLFAAIFQFPDGLQMLSSGVLRGMKDTRVPMLLAMISYWGLGMPLGLGLGFALEWNSRGMWIGLIIGLTAAALLLGWRFRVVSERMFAGIP.

The next 12 helical transmembrane spans lie at 10–30 (IALSICFMAVSFVISRFGSEV), 34–54 (LLLALPLVLGHVSTGLIGFVL), 74–94 (ALLWLPMLVPMGTLISLTVLV), 121–141 (GLVMFTFLSVVPALLPLFGIV), 179–199 (FPTMLLGFGGLLVLVPLSYAL), 214–234 (LGIATVTVMWLQAVVFALYLW), 264–284 (LPIGISILMEGGLFIVTTLLI), 292–312 (IAAHQIALSVAQLCFMIPMGV), 335–355 (VAWAGYAIVIGTQTLSASVLL), 369–389 (LVVASLASKLLLFAAIFQFPD), 409–429 (MLLAMISYWGLGMPLGLGLGF), and 437–457 (GMWIGLIIGLTAAALLLGWRF).

This sequence belongs to the multi antimicrobial extrusion (MATE) (TC 2.A.66.1) family.

The protein resides in the cell inner membrane. In terms of biological role, multidrug efflux pump. The chain is Probable multidrug resistance protein NorM (norM) from Xylella fastidiosa (strain Temecula1 / ATCC 700964).